The following is a 325-amino-acid chain: Lipoyl synthase (325 aa).

The [4Fe-4S] cluster site is built by Cys-68, Cys-73, Cys-79, Cys-94, Cys-98, Cys-101, and Ser-308. Residues 80–297 (FGGGTATFMI…ARVANELGFT (218 aa)) enclose the Radical SAM core domain.

Belongs to the radical SAM superfamily. Lipoyl synthase family. Requires [4Fe-4S] cluster as cofactor.

It localises to the cytoplasm. It carries out the reaction [[Fe-S] cluster scaffold protein carrying a second [4Fe-4S](2+) cluster] + N(6)-octanoyl-L-lysyl-[protein] + 2 oxidized [2Fe-2S]-[ferredoxin] + 2 S-adenosyl-L-methionine + 4 H(+) = [[Fe-S] cluster scaffold protein] + N(6)-[(R)-dihydrolipoyl]-L-lysyl-[protein] + 4 Fe(3+) + 2 hydrogen sulfide + 2 5'-deoxyadenosine + 2 L-methionine + 2 reduced [2Fe-2S]-[ferredoxin]. It participates in protein modification; protein lipoylation via endogenous pathway; protein N(6)-(lipoyl)lysine from octanoyl-[acyl-carrier-protein]: step 2/2. In terms of biological role, catalyzes the radical-mediated insertion of two sulfur atoms into the C-6 and C-8 positions of the octanoyl moiety bound to the lipoyl domains of lipoate-dependent enzymes, thereby converting the octanoylated domains into lipoylated derivatives. The chain is Lipoyl synthase from Alcanivorax borkumensis (strain ATCC 700651 / DSM 11573 / NCIMB 13689 / SK2).